The sequence spans 78 residues: Putative DPH3 homolog B (78 aa).

One can recognise a DPH-type MB domain in the interval 4–60 (FHDEVEIEDFQYDEDSETYFCPCPCGDNFSITKEELENGEGVAMCPGCSLIIKVIYD). Zn(2+)-binding residues include Cys26, Cys28, Cys48, and Cys51.

This sequence belongs to the DPH3 family.

The protein is Putative DPH3 homolog B (DPH3P1) of Homo sapiens (Human).